Reading from the N-terminus, the 143-residue chain is Class II hydrophobin qid3 (143 aa).

A signal peptide spans 1–17 (MKFLTVAAVFFTAVLAA). Positions 20–37 (NYPPPPPPTYAPPPPTYT) are enriched in pro residues. Residues 20–67 (NYPPPPPPTYAPPPPTYTLPPNGNGGGNGNGNGNGNGGGNGNGNGNTN) form a disordered region. Tandem repeats lie at residues 41-42 (NG), 43-44 (NG), 47-48 (NG), 49-50 (NG), 51-52 (NG), 53-54 (NG), 55-56 (NG), 59-60 (NG), 61-62 (NG), and 63-64 (NG). The 10 X 2 AA repeats of N-G stretch occupies residues 41–64 (NGNGGGNGNGNGNGNGGGNGNGNG). Over residues 42–63 (GNGGGNGNGNGNGNGGGNGNGN) the composition is skewed to gly residues. Disulfide bonds link Cys-74–Cys-124, Cys-85–Cys-97, and Cys-125–Cys-136.

It belongs to the cerato-ulmin hydrophobin family. Homotetramer. Further self-assembles to form highly ordered films at water-air interfaces through intermolecular interactions.

Its subcellular location is the secreted. The protein localises to the cell wall. In terms of biological role, aerial growth, conidiation, and dispersal of filamentous fungi in the environment rely upon a capability of their secreting small amphipathic proteins called hydrophobins (HPBs) with low sequence identity. Class I can self-assemble into an outermost layer of rodlet bundles on aerial cell surfaces, conferring cellular hydrophobicity that supports fungal growth, development and dispersal; whereas Class II form highly ordered films at water-air interfaces through intermolecular interactions but contribute nothing to the rodlet structure. Qid3 is a class II hydrophobin that might acts as a chitinase inhibitor at the cell surface that blocks the degradation of the chitin rings localized in the budding region of dividing cells. This chain is Class II hydrophobin qid3, found in Trichoderma harzianum (Hypocrea lixii).